A 253-amino-acid polypeptide reads, in one-letter code: Ubiquinone biosynthesis O-methyltransferase (253 aa).

S-adenosyl-L-methionine is bound by residues arginine 47, glycine 78, aspartate 99, and methionine 141.

This sequence belongs to the methyltransferase superfamily. UbiG/COQ3 family.

The catalysed reaction is a 3-demethylubiquinol + S-adenosyl-L-methionine = a ubiquinol + S-adenosyl-L-homocysteine + H(+). The enzyme catalyses a 3-(all-trans-polyprenyl)benzene-1,2-diol + S-adenosyl-L-methionine = a 2-methoxy-6-(all-trans-polyprenyl)phenol + S-adenosyl-L-homocysteine + H(+). The protein operates within cofactor biosynthesis; ubiquinone biosynthesis. O-methyltransferase that catalyzes the 2 O-methylation steps in the ubiquinone biosynthetic pathway. The polypeptide is Ubiquinone biosynthesis O-methyltransferase (Rhodopseudomonas palustris (strain BisB5)).